Reading from the N-terminus, the 227-residue chain is MNTIISPKEIALYIDHTLLKPEASPAAIRTLCAEAREYSFKTVCVNSCYVPLCVEELQACPVDVCSVVGFPLGAMLSSAKAYEAKLAVAAGADEIDMVINIGLLKAGELEAVRADIETVFAACGEADLKVIIETGLLSDAEKKSVCQICKEVGVAFVKTSTGFGHGGATVADVELMRAVVGERCKVKASGGVRNLADARALIAAGANRIGASAGIAIVNGEEVPPSR.

The active-site Proton donor/acceptor is the aspartate 96. Catalysis depends on lysine 158, which acts as the Schiff-base intermediate with acetaldehyde. Catalysis depends on lysine 187, which acts as the Proton donor/acceptor.

The protein belongs to the DeoC/FbaB aldolase family. DeoC type 1 subfamily.

The protein localises to the cytoplasm. The enzyme catalyses 2-deoxy-D-ribose 5-phosphate = D-glyceraldehyde 3-phosphate + acetaldehyde. Its pathway is carbohydrate degradation; 2-deoxy-D-ribose 1-phosphate degradation; D-glyceraldehyde 3-phosphate and acetaldehyde from 2-deoxy-alpha-D-ribose 1-phosphate: step 2/2. In terms of biological role, catalyzes a reversible aldol reaction between acetaldehyde and D-glyceraldehyde 3-phosphate to generate 2-deoxy-D-ribose 5-phosphate. This is Deoxyribose-phosphate aldolase from Desulfotalea psychrophila (strain LSv54 / DSM 12343).